We begin with the raw amino-acid sequence, 426 residues long: Glutamate-1-semialdehyde 2,1-aminomutase (426 aa).

An N6-(pyridoxal phosphate)lysine modification is found at Lys265.

Belongs to the class-III pyridoxal-phosphate-dependent aminotransferase family. HemL subfamily. In terms of assembly, homodimer. Requires pyridoxal 5'-phosphate as cofactor.

The protein resides in the cytoplasm. It carries out the reaction (S)-4-amino-5-oxopentanoate = 5-aminolevulinate. The protein operates within porphyrin-containing compound metabolism; protoporphyrin-IX biosynthesis; 5-aminolevulinate from L-glutamyl-tRNA(Glu): step 2/2. This Hydrogenovibrio crunogenus (strain DSM 25203 / XCL-2) (Thiomicrospira crunogena) protein is Glutamate-1-semialdehyde 2,1-aminomutase.